Consider the following 153-residue polypeptide: Aminoglycoside N(6')-acetyltransferase type 1 (153 aa).

Residues Pro-6 to Ala-153 enclose the N-acetyltransferase domain. Substrate-binding residues include Trp-27, Tyr-70, Glu-83, Asp-119, and Glu-140.

Homodimer.

The catalysed reaction is kanamycin B + acetyl-CoA = N(6')-acetylkanamycin B + CoA + H(+). Functionally, catalyzes the transfer of an acetyl group from acetyl-CoA to the 6'-amino group of aminoglycoside molecules conferring resistance to antibiotics containing the purpurosamine ring including amikacin, gentamicin, kanamycin B, tobramycin, netilmicin, and isepamicin. The chain is Aminoglycoside N(6')-acetyltransferase type 1 from Stenotrophomonas maltophilia (Pseudomonas maltophilia).